A 92-amino-acid chain; its full sequence is Large ribosomal subunit protein bL31 (92 aa).

Residues 66-92 (GMGSANPDVDAPAPKKAAKKSDAESDS) form a disordered region. Over residues 70–80 (ANPDVDAPAPK) the composition is skewed to low complexity.

The protein belongs to the bacterial ribosomal protein bL31 family. Type A subfamily. In terms of assembly, part of the 50S ribosomal subunit.

Functionally, binds the 23S rRNA. This Synechococcus sp. (strain RCC307) protein is Large ribosomal subunit protein bL31.